An 803-amino-acid chain; its full sequence is Volume-regulated anion channel subunit LRRC8B (803 aa).

At 1-25 the chain is on the cytoplasmic side; sequence MITLTELKCLADAQSSYHILKPWWD. Residues 26–46 traverse the membrane as a helical segment; the sequence is VFWYYITLIMLLVAVLAGALQ. Residues 47 to 119 are Extracellular-facing; it reads LTQSRVLCCL…YEKQLHWFAK (73 aa). Cystine bridges form between cysteine 55/cysteine 304 and cysteine 109/cysteine 289. The N-linked (GlcNAc...) asparagine glycan is linked to asparagine 78. Residues 120–140 traverse the membrane as a helical segment; that stretch reads FFPYLVLLHTLIFAACSNFWL. Residues 141–261 are Cytoplasmic-facing; sequence HYPSTSSRLE…DIIYRVYLKQ (121 aa). Serine 186 and serine 196 each carry phosphoserine. The helical transmembrane segment at 262-282 threads the bilayer; that stretch reads IIVKVILFVLIITYVPYFLTH. Residues 283–307 are Extracellular-facing; the sequence is ITLEIDCSVDVQAFTGYKRYQCVYS. Residues 308–328 traverse the membrane as a helical segment; sequence LAEIFKVLASFYVILVILYGL. Residues 329–803 are Cytoplasmic-facing; sequence TSSYSLWWML…ERLQTCLDKC (475 aa). LRR repeat units lie at residues 464 to 486, 488 to 509, 511 to 532, 539 to 559, 562 to 582, 586 to 607, 609 to 630, 634 to 655, 657 to 678, 680 to 701, 703 to 724, 726 to 747, and 749 to 771; these read NLKELRVYHSSLVVDHPALAFLE, NLKILRLKFTEMGKIPRWVFHL, NLKELYLSGCVLPEQLSTMQLE, NLRTLYLKSSLSRIPQVVTDL, SLQKLSLDNEGSKLVVLNNLK, NLKSLELISCDLERIPHSIFSL, NLHELDLRENNLKTVEEIISFQ, NLSCLKLWHNNIAYIPAQIGAL, NLEQLSLDHNNIENLPLQLFLC, KLHYLDLSYNHLTFIPEEIQYL, NLQYFAVTNNNIEMLPDGLFQC, KLQCLLLGKNSLMNLSPHVGEL, and NLTHLELIGNYLETLPPELEGCQ.

Belongs to the LRRC8 family. As to quaternary structure, heterohexamer; oligomerizes with other LRRC8 proteins (LRRC8A, LRRC8C, LRRC8D and/or LRRC8E) to form a heterohexamer. In vivo, the subunit composition may depend primarily on expression levels, and heterooligomeric channels containing various proportions of the different LRRC8 proteins may coexist.

It is found in the cell membrane. The protein localises to the endoplasmic reticulum membrane. The enzyme catalyses chloride(in) = chloride(out). It catalyses the reaction iodide(out) = iodide(in). It carries out the reaction taurine(out) = taurine(in). Non-essential component of the volume-regulated anion channel (VRAC, also named VSOAC channel), an anion channel required to maintain a constant cell volume in response to extracellular or intracellular osmotic changes. The VRAC channel conducts iodide better than chloride and can also conduct organic osmolytes like taurine. Channel activity requires LRRC8A plus at least one other family member (LRRC8B, LRRC8C, LRRC8D or LRRC8E); channel characteristics depend on the precise subunit composition. The chain is Volume-regulated anion channel subunit LRRC8B from Homo sapiens (Human).